Consider the following 425-residue polypeptide: Serine--tRNA ligase (425 aa).

Positions 108 to 134 are disordered; it reads YPNLPSEACPDGRSEDDNKEVRRWGDP. The span at 117–134 shows a compositional bias: basic and acidic residues; that stretch reads PDGRSEDDNKEVRRWGDP. 233–235 contacts L-serine; the sequence is TAE. 264-266 is a binding site for ATP; sequence RRE. E287 is an L-serine binding site. Residue 351–354 coordinates ATP; sequence EISS. Residue S385 participates in L-serine binding.

The protein belongs to the class-II aminoacyl-tRNA synthetase family. Type-1 seryl-tRNA synthetase subfamily. As to quaternary structure, homodimer. The tRNA molecule binds across the dimer.

The protein resides in the cytoplasm. The enzyme catalyses tRNA(Ser) + L-serine + ATP = L-seryl-tRNA(Ser) + AMP + diphosphate + H(+). The catalysed reaction is tRNA(Sec) + L-serine + ATP = L-seryl-tRNA(Sec) + AMP + diphosphate + H(+). Its pathway is aminoacyl-tRNA biosynthesis; selenocysteinyl-tRNA(Sec) biosynthesis; L-seryl-tRNA(Sec) from L-serine and tRNA(Sec): step 1/1. Catalyzes the attachment of serine to tRNA(Ser). Is also able to aminoacylate tRNA(Sec) with serine, to form the misacylated tRNA L-seryl-tRNA(Sec), which will be further converted into selenocysteinyl-tRNA(Sec). This is Serine--tRNA ligase from Synechococcus sp. (strain CC9311).